Consider the following 250-residue polypeptide: Small ribosomal subunit protein uS3 (250 aa).

Residues 39–111 (IRPLIKNHYP…KVQINIFEVK (73 aa)) form the KH type-2 domain.

The protein belongs to the universal ribosomal protein uS3 family. In terms of assembly, part of the 30S ribosomal subunit. Forms a tight complex with proteins S10 and S14.

Its function is as follows. Binds the lower part of the 30S subunit head. Binds mRNA in the 70S ribosome, positioning it for translation. This is Small ribosomal subunit protein uS3 from Ziziphus jujuba witches'-broom phytoplasma.